A 629-amino-acid polypeptide reads, in one-letter code: (-)-alpha pinene synthase 1, chloroplastic (629 aa).

A chloroplast-targeting transit peptide spans 1 to 48; that stretch reads MSPVSVISLPSDLCLPTSFIDRSGRELNPLHITIPNVAMRRQGKLMTR. Residues Asp380, Asp384, and Asp532 each coordinate Mg(2+). Residues 380 to 384 carry the DDXXD motif motif; that stretch reads DDMYD.

The protein belongs to the terpene synthase family. Tpsd subfamily. Requires Mg(2+) as cofactor. Mn(2+) serves as cofactor.

It is found in the plastid. Its subcellular location is the chloroplast. The enzyme catalyses (2E)-geranyl diphosphate = (1S,5S)-alpha-pinene + diphosphate. The catalysed reaction is (2E)-geranyl diphosphate = (1S,5S)-beta-pinene + diphosphate. The protein operates within terpene metabolism; oleoresin biosynthesis. It participates in secondary metabolite biosynthesis; terpenoid biosynthesis. In terms of biological role, monoterpene synthase (TPS) involved in the biosynthesis of monoterpene natural products included in conifer oleoresin secretions and volatile emissions; these compounds contribute to biotic and abiotic stress defense against herbivores and pathogens. Catalyzes the conversion of (2E)-geranyl diphosphate (GPP) to (-)-alpha-pinene and, to a lower extent, to (-)-beta-pinene. The sequence is that of (-)-alpha pinene synthase 1, chloroplastic from Pinus contorta (Shore pine).